We begin with the raw amino-acid sequence, 197 residues long: Ribonuclease HII (197 aa).

The RNase H type-2 domain maps to His11–Leu197. Positions 17, 18, and 109 each coordinate a divalent metal cation.

The protein belongs to the RNase HII family. The cofactor is Mn(2+). It depends on Mg(2+) as a cofactor.

It localises to the cytoplasm. The catalysed reaction is Endonucleolytic cleavage to 5'-phosphomonoester.. Endonuclease that specifically degrades the RNA of RNA-DNA hybrids. The polypeptide is Ribonuclease HII (Actinobacillus pleuropneumoniae serotype 5b (strain L20)).